The sequence spans 456 residues: Gamma-aminobutyric acid receptor subunit alpha-1 (456 aa).

Residues 1 to 27 (MRKSPGLSDCLWAWILLLSTLTGRSYG) form the signal peptide. Over 28-253 (QPSLQDELKD…FHLKRKIGYF (226 aa)) the chain is Extracellular. Asn-38 is a glycosylation site (N-linked (GlcNAc...) asparagine). Position 94 (Arg-94) interacts with 4-aminobutanoate. N-linked (GlcNAc...) asparagine glycosylation is present at Asn-138. Position 157 (Thr-157) interacts with 4-aminobutanoate. A disulfide bridge connects residues Cys-166 and Cys-180. The helical transmembrane segment at 254–274 (VIQTYLPCIMTVILSQVSFWL) threads the bilayer. The Cytoplasmic segment spans residues 275–279 (NRESV). A helical membrane pass occupies residues 280-301 (PARTVFGVTTVLTMTTLSISAR). Over 302–311 (NSLPKVAYAT) the chain is Extracellular. The chain crosses the membrane as a helical span at residues 312 to 333 (AMDWFIAVCYAFVFSALIEFAT). Topologically, residues 334–421 (VNYFTKRGYA…TFNSVSKIDR (88 aa)) are cytoplasmic. Residues 422-441 (LSRIAFPLLFGIFNLIYWAT) traverse the membrane as a helical segment. At 442-456 (YLNREPQLKAPTPHQ) the chain is on the extracellular side.

This sequence belongs to the ligand-gated ion channel (TC 1.A.9) family. Gamma-aminobutyric acid receptor (TC 1.A.9.5) subfamily. GABRA1 sub-subfamily. In terms of assembly, heteropentamer, formed by a combination of alpha (GABRA1-6), beta (GABRB1-3), gamma (GABRG1-3), delta (GABRD), epsilon (GABRE), rho (GABRR1-3), pi (GABRP) and theta (GABRQ) subunits, each subunit exhibiting distinct physiological and pharmacological properties. Interacts with UBQLN1. Interacts with TRAK1. Interacts with KIF21B. Identified in a complex of 720 kDa composed of LHFPL4, NLGN2, GABRA1, GABRB2, GABRG2 and GABRB3. Interacts with LHFPL4. Interacts with NLGN2. Interacts with SHISA7; interaction leads to the regulation of GABA(A) receptor trafficking, channel deactivation kinetics and pharmacology.

It is found in the postsynaptic cell membrane. The protein resides in the cell membrane. Its subcellular location is the cytoplasmic vesicle membrane. The catalysed reaction is chloride(in) = chloride(out). Its activity is regulated as follows. Allosterically activated by benzodiazepines, the neuroanesthetic alphaxalone and pentobarbital. Inhibited by the antagonist bicuculline. Potentiated by histamine. Functionally, alpha subunit of the heteropentameric ligand-gated chloride channel gated by gamma-aminobutyric acid (GABA), a major inhibitory neurotransmitter in the brain. GABA-gated chloride channels, also named GABA(A) receptors (GABAAR), consist of five subunits arranged around a central pore and contain GABA active binding site(s) located at the alpha and beta subunit interface(s). When activated by GABA, GABAARs selectively allow the flow of chloride anions across the cell membrane down their electrochemical gradient. Alpha-1/GABRA1-containing GABAARs are largely synaptic. Chloride influx into the postsynaptic neuron following GABAAR opening decreases the neuron ability to generate a new action potential, thereby reducing nerve transmission. GABAARs containing alpha-1 and beta-2 or -3 subunits exhibit synaptogenic activity; the gamma-2 subunit being necessary but not sufficient to induce rapid synaptic contacts formation. GABAARs function also as histamine receptor where histamine binds at the interface of two neighboring beta subunits and potentiates GABA response. GABAARs containing alpha, beta and epsilon subunits also permit spontaneous chloride channel activity while preserving the structural information required for GABA-gated openings. Alpha-1-mediated plasticity in the orbitofrontal cortex regulates context-dependent action selection. Together with rho subunits, may also control neuronal and glial GABAergic transmission in the cerebellum. This chain is Gamma-aminobutyric acid receptor subunit alpha-1 (GABRA1), found in Pongo abelii (Sumatran orangutan).